The following is a 279-amino-acid chain: MTQHFPTRQLRFFLTAPTPCPYLPGREERKVFAHLPLSDGPIVNDSLTQVGFRRSQNIAYRPACETCRACQSARAPATEYILSRSERKILGRNDDLERHLVEAEATLEQFELLRRYLLTRHADGGMAEMTWPDYVAMVEDTAVRTHLIEYRRKSLDRGPGDLVACVLVDVLADGLSLVYSFYEPDQPRRSLGSFIILDHIVQAQQNALPYVYLGYWVPGSEKMAYKARFSPLEILKPGGWSLMSARERGARPPRGPGALKDACDLPLSDAQPADIEDLD.

Positions 245–279 (ARERGARPPRGPGALKDACDLPLSDAQPADIEDLD) are disordered.

The protein belongs to the R-transferase family. Bpt subfamily.

Its subcellular location is the cytoplasm. It catalyses the reaction N-terminal L-glutamyl-[protein] + L-leucyl-tRNA(Leu) = N-terminal L-leucyl-L-glutamyl-[protein] + tRNA(Leu) + H(+). The catalysed reaction is N-terminal L-aspartyl-[protein] + L-leucyl-tRNA(Leu) = N-terminal L-leucyl-L-aspartyl-[protein] + tRNA(Leu) + H(+). In terms of biological role, functions in the N-end rule pathway of protein degradation where it conjugates Leu from its aminoacyl-tRNA to the N-termini of proteins containing an N-terminal aspartate or glutamate. This Caulobacter vibrioides (strain ATCC 19089 / CIP 103742 / CB 15) (Caulobacter crescentus) protein is Aspartate/glutamate leucyltransferase.